We begin with the raw amino-acid sequence, 787 residues long: Phenylalanine--tRNA ligase beta subunit (787 aa).

In terms of domain architecture, tRNA-binding spans 39–149; it reads APAFSGVVVA…EDAPVGTNIR (111 aa). The B5 domain occupies 400–475; the sequence is PEAKQVGLRL…RVYGYENIPD (76 aa). Residues Asp-453, Asp-459, Glu-462, and Glu-463 each contribute to the Mg(2+) site. One can recognise an FDX-ACB domain in the interval 694-786; it reads SKFQPVRRDL…VATEAGARLR (93 aa).

It belongs to the phenylalanyl-tRNA synthetase beta subunit family. Type 1 subfamily. Tetramer of two alpha and two beta subunits. Mg(2+) serves as cofactor.

The protein resides in the cytoplasm. It catalyses the reaction tRNA(Phe) + L-phenylalanine + ATP = L-phenylalanyl-tRNA(Phe) + AMP + diphosphate + H(+). In Neisseria gonorrhoeae (strain ATCC 700825 / FA 1090), this protein is Phenylalanine--tRNA ligase beta subunit.